Consider the following 199-residue polypeptide: uncharacterized protein (199 aa).

The tract at residues 1–30 is disordered; that stretch reads MEDAAAPGRTEGVLERQGAPPAAGQGGALV. Positions 71–101 form a coiled coil; that stretch reads RANATNKLTVIAEQIQHLQEQARKVLEDAHR.

This is an uncharacterized protein from Homo sapiens (Human).